Reading from the N-terminus, the 293-residue chain is Ribosomal RNA small subunit methyltransferase A (293 aa).

Residues Asn33, Val35, Gly60, Glu81, Asp111, and Asn130 each coordinate S-adenosyl-L-methionine.

This sequence belongs to the class I-like SAM-binding methyltransferase superfamily. rRNA adenine N(6)-methyltransferase family. RsmA subfamily.

It is found in the cytoplasm. The catalysed reaction is adenosine(1518)/adenosine(1519) in 16S rRNA + 4 S-adenosyl-L-methionine = N(6)-dimethyladenosine(1518)/N(6)-dimethyladenosine(1519) in 16S rRNA + 4 S-adenosyl-L-homocysteine + 4 H(+). Specifically dimethylates two adjacent adenosines (A1518 and A1519) in the loop of a conserved hairpin near the 3'-end of 16S rRNA in the 30S particle. May play a critical role in biogenesis of 30S subunits. The chain is Ribosomal RNA small subunit methyltransferase A from Corynebacterium glutamicum (strain ATCC 13032 / DSM 20300 / JCM 1318 / BCRC 11384 / CCUG 27702 / LMG 3730 / NBRC 12168 / NCIMB 10025 / NRRL B-2784 / 534).